Consider the following 177-residue polypeptide: Cyclic pyranopterin monophosphate synthase 3 (177 aa).

Substrate-binding positions include 79-81 and 116-117; these read LCH and ME. Asp131 is an active-site residue. The segment at 150-177 is disordered; the sequence is KSGGRSGHYRRHDADVKPSDGGSTEDGC.

It belongs to the MoaC family. As to quaternary structure, homohexamer; trimer of dimers.

The enzyme catalyses (8S)-3',8-cyclo-7,8-dihydroguanosine 5'-triphosphate = cyclic pyranopterin phosphate + diphosphate. The protein operates within cofactor biosynthesis; molybdopterin biosynthesis. In terms of biological role, catalyzes the conversion of (8S)-3',8-cyclo-7,8-dihydroguanosine 5'-triphosphate to cyclic pyranopterin monophosphate (cPMP). The protein is Cyclic pyranopterin monophosphate synthase 3 (moaC3) of Mycobacterium bovis (strain ATCC BAA-935 / AF2122/97).